The following is a 259-amino-acid chain: 3-deoxy-manno-octulosonate cytidylyltransferase (259 aa).

The protein belongs to the KdsB family.

Its subcellular location is the cytoplasm. It carries out the reaction 3-deoxy-alpha-D-manno-oct-2-ulosonate + CTP = CMP-3-deoxy-beta-D-manno-octulosonate + diphosphate. It functions in the pathway nucleotide-sugar biosynthesis; CMP-3-deoxy-D-manno-octulosonate biosynthesis; CMP-3-deoxy-D-manno-octulosonate from 3-deoxy-D-manno-octulosonate and CTP: step 1/1. The protein operates within bacterial outer membrane biogenesis; lipopolysaccharide biosynthesis. In terms of biological role, activates KDO (a required 8-carbon sugar) for incorporation into bacterial lipopolysaccharide in Gram-negative bacteria. This chain is 3-deoxy-manno-octulosonate cytidylyltransferase, found in Alkalilimnicola ehrlichii (strain ATCC BAA-1101 / DSM 17681 / MLHE-1).